The chain runs to 1121 residues: MSAPKKTYSSTTSAKSKHSVRVAQTTADAALEAVYEMSGDSGDSFDYSKSVGQSAESVPAGAVTAYLQRMQRGGLIQTFGCMVAVEEPNFCVIAYSENASEFLDLMPQAVPSMGEMDVLGIGTDIRTLFTPSSGAALEKAAATQDISLLNPITVHCRRSGKPLYAIAHRIDIGIVIDFEAVKMNDVSVSAAGALQSHKLAAKAITRLQALPGGDIGLLCDTVVEEVRELTGYDRVMAYKFHEDEHGEVVAEIRRMDLEPYLGLHYPATDIPQASRFLFMKNRVRVIADCCASPVKLIQDPDIKQPVSLAGSTLRAPHGCHAQYMGNMGSIASLVMAVIINDNEEDSRGAIQRGRKLWGLVVCHHTSPRTVPFPLRSACEFLMQVFGMQLNMEVELAAQLREKHILRTQTLLCDMLLRDAPIGIVSQTPNIMDLVKCDGAALYYGKRFWLLGTTPTENQIKDIAEWLLEYHKDSTGLSTDSLADANYPGAHLLGDAVCGMAAAKITAKDFLFWFRSHTAKEVKWGGAKHDPAEKDDGRKMHPRSSFKAFLEVVKRRSLPWEDVEMDAIHSLQLILRGSFQDIDDSDTKTMIHARLNDLKLHGMDELSVVANEMVRLIETATAPILAVDSTGMINGWNAKIAHVTGLPVSEAMGRSLVKDLVLDESVVVVERLLYLASQGEEEQNVEIKLKTFGTQTEKEAVILIVNACSSRDVSDSVVGVCFVGQDVTGQKMFMDKFTRIQGDYKTIVKNPHPLIPPIFGGDEYGYCFEWNPAMEALTGWKHDEVVGKLLVGEIFGMEMMCCRLKSQDSMTKFMISLNNAMDGTNTDKFSFSFCNREGKFVEALLSTNKRTNADGVITGVFCFLQIASSELQQALTVQRATEKVAIAKLKELAYIRQEIKNPLCGITFTRQLLEDTDLSDDQKQFLDTSAVCEQQLQKVLNDMDLESIEDGYLELDTAEFEMGTVMDAVISQGMTTSREKGLQIIRETPREISTMRLFGDQIRLQQVLSDFLINAIRFTPSSEGWVKIKVVPTRKRLGGNVHVMHLEFRVSHPGGGLPDELVLEMYDRAKGMTQEGLGLNMCRKLVRLMNGDVQYVRENAQCYFVVYVELPMAQRDDAASQM.

Positions 214-393 (DIGLLCDTVV…VFGMQLNMEV (180 aa)) constitute a GAF domain. Phytochromobilin is bound at residue Cys-319. 2 PAS domains span residues 608–679 (VANE…SQGE) and 742–813 (DYKT…TKFM). One can recognise a Histidine kinase domain in the interval 893-1113 (YIRQEIKNPL…VVYVELPMAQ (221 aa)).

It belongs to the phytochrome family. In terms of assembly, homodimer. In terms of processing, contains one covalently linked phytochromobilin chromophore.

In terms of biological role, regulatory photoreceptor which exists in two forms that are reversibly interconvertible by light: the Pr form that absorbs maximally in the red region of the spectrum and the Pfr form that absorbs maximally in the far-red region. Photoconversion of Pr to Pfr induces an array of morphogenic responses, whereas reconversion of Pfr to Pr cancels the induction of those responses. Pfr controls the expression of a number of nuclear genes including those encoding the small subunit of ribulose-bisphosphate carboxylase, chlorophyll A/B binding protein, protochlorophyllide reductase, rRNA, etc. It also controls the expression of its own gene(s) in a negative feedback fashion. The chain is Phytochrome 2 (PHY2) from Ceratodon purpureus (Fire moss).